The following is a 292-amino-acid chain: RNA polymerase II transcriptional coactivator SUB1 (292 aa).

Disordered stretches follow at residues 1 to 31 (MSYY…GGMP) and 117 to 292 (LLSD…SEEE). Positions 20–31 (LSNSNNNNGGMP) are enriched in low complexity. The residue at position 119 (Ser-119) is a Phosphoserine. Composition is skewed to basic and acidic residues over residues 133–166 (NNDK…LEPR), 179–191 (PHEE…EREA), 204–240 (KQQE…KIAE), and 251–267 (AKKE…KDAN). Phosphoserine is present on residues Ser-268, Ser-269, and Ser-289.

It belongs to the transcriptional coactivator PC4 family.

The protein resides in the nucleus. In terms of biological role, plays a role in the release of TFIIB from the transcription complex during transcription initiation. Binds to TFIIB and specifically inhibits the formation of the TBP-TFIIB-promoter complexes. This is RNA polymerase II transcriptional coactivator SUB1 (SUB1) from Saccharomyces cerevisiae (strain ATCC 204508 / S288c) (Baker's yeast).